The primary structure comprises 525 residues: GMP synthase [glutamine-hydrolyzing] (525 aa).

One can recognise a Glutamine amidotransferase type-1 domain in the interval 16 to 205; that stretch reads PVLVVDFGAQ…LHDFAGLGAQ (190 aa). The Nucleophile role is filled by C93. Catalysis depends on residues H179 and E181. One can recognise a GMPS ATP-PPase domain in the interval 206-399; that stretch reads WTPANIANAL…LGLPEEIVAR (194 aa). 233-239 is a binding site for ATP; sequence SGGVDSA.

Homodimer.

The enzyme catalyses XMP + L-glutamine + ATP + H2O = GMP + L-glutamate + AMP + diphosphate + 2 H(+). Its pathway is purine metabolism; GMP biosynthesis; GMP from XMP (L-Gln route): step 1/1. Its function is as follows. Catalyzes the synthesis of GMP from XMP. In Mycobacterium bovis (strain BCG / Pasteur 1173P2), this protein is GMP synthase [glutamine-hydrolyzing].